Reading from the N-terminus, the 328-residue chain is Diacetylchitobiose uptake system permease protein DasB (328 aa).

The tract at residues 1-27 (MTVQTERPPSGPSDVRKADGGGTGGTR) is disordered. 6 consecutive transmembrane segments (helical) span residues 36-56 (ALAP…LLGW), 104-124 (IIFT…IGLL), 134-154 (FVLM…ATTV), 188-208 (FSTF…FVAI), 247-267 (FLYA…VQVY), and 297-317 (MGAA…AYYL). The ABC transmembrane type-1 domain maps to 100–316 (TVRSIIFTAV…LILLGLTAYY (217 aa)).

It belongs to the binding-protein-dependent transport system permease family. The complex is composed of two ATP-binding proteins (MsiK), two transmembrane proteins (DasB and DasC) and a solute-binding protein (DasA).

It is found in the cell membrane. Its function is as follows. Part of the ABC transporter complex DasABC-MsiK involved in N,N'-diacetylchitobiose ((GlcNAc)2) uptake. Responsible for the translocation of the substrate across the membrane. The polypeptide is Diacetylchitobiose uptake system permease protein DasB (Streptomyces coelicolor (strain ATCC BAA-471 / A3(2) / M145)).